Consider the following 159-residue polypeptide: 2-C-methyl-D-erythritol 2,4-cyclodiphosphate synthase (159 aa).

A divalent metal cation contacts are provided by aspartate 10 and histidine 12. 4-CDP-2-C-methyl-D-erythritol 2-phosphate-binding positions include 10 to 12 (DVH) and 37 to 38 (HS). Position 45 (histidine 45) interacts with a divalent metal cation. Residues 59 to 61 (DIG), 64 to 68 (FLDTD), 103 to 109 (AQAPKML), 135 to 138 (TTTE), phenylalanine 142, and arginine 145 contribute to the 4-CDP-2-C-methyl-D-erythritol 2-phosphate site.

It belongs to the IspF family. Homotrimer. A divalent metal cation serves as cofactor.

The enzyme catalyses 4-CDP-2-C-methyl-D-erythritol 2-phosphate = 2-C-methyl-D-erythritol 2,4-cyclic diphosphate + CMP. The protein operates within isoprenoid biosynthesis; isopentenyl diphosphate biosynthesis via DXP pathway; isopentenyl diphosphate from 1-deoxy-D-xylulose 5-phosphate: step 4/6. Functionally, involved in the biosynthesis of isopentenyl diphosphate (IPP) and dimethylallyl diphosphate (DMAPP), two major building blocks of isoprenoid compounds. Catalyzes the conversion of 4-diphosphocytidyl-2-C-methyl-D-erythritol 2-phosphate (CDP-ME2P) to 2-C-methyl-D-erythritol 2,4-cyclodiphosphate (ME-CPP) with a corresponding release of cytidine 5-monophosphate (CMP). In Francisella tularensis subsp. tularensis (strain FSC 198), this protein is 2-C-methyl-D-erythritol 2,4-cyclodiphosphate synthase.